We begin with the raw amino-acid sequence, 296 residues long: 2-dehydropantoate 2-reductase (296 aa).

NADP(+) is bound by residues 7 to 12, Asn94, and Ala120; that span reads GPGAVG. Asn94 lines the substrate pocket. Catalysis depends on Lys175, which acts as the Proton donor. Residues Asn179, Asn183, Asn193, and Ser245 each contribute to the substrate site. Glu257 is an NADP(+) binding site.

Belongs to the ketopantoate reductase family.

The protein resides in the cytoplasm. The catalysed reaction is (R)-pantoate + NADP(+) = 2-dehydropantoate + NADPH + H(+). Its pathway is cofactor biosynthesis; (R)-pantothenate biosynthesis; (R)-pantoate from 3-methyl-2-oxobutanoate: step 2/2. In terms of biological role, catalyzes the NADPH-dependent reduction of ketopantoate into pantoic acid. The polypeptide is 2-dehydropantoate 2-reductase (panE) (Vibrio cholerae serotype O1 (strain ATCC 39315 / El Tor Inaba N16961)).